Consider the following 373-residue polypeptide: HAUS augmin-like complex subunit 8 (373 aa).

3 stretches are compositionally biased toward basic and acidic residues: residues 1 to 10 (MADSSERDAG), 32 to 43 (RVVESRYLQYDK), and 52 to 73 (AKEE…REES). The segment at 1–76 (MADSSERDAG…PRSREESQVM (76 aa)) is disordered. Position 2 is an N-acetylalanine (Ala2). Residue Ser99 is modified to Phosphoserine. Residues 130-204 (DKKRILRKKR…LRRQLLLRQK (75 aa)) adopt a coiled-coil conformation.

The protein belongs to the HAUS8 family. In terms of assembly, component of the HAUS augmin-like complex. The complex interacts with the gamma-tubulin ring complex and this interaction is required for spindle assembly. Associates with microtubules. The interaction with microtubules is strong during mitosis, while it is weak or absent during interphase. It is unclear whether this interaction is direct or indirect. Interacts with EML3 (phosphorylated at 'Thr-882') and TUBG1.

The protein localises to the cytoplasm. It localises to the cytoskeleton. Its subcellular location is the microtubule organizing center. It is found in the centrosome. The protein resides in the spindle. The protein localises to the spindle pole. Its function is as follows. Contributes to mitotic spindle assembly, maintenance of centrosome integrity and completion of cytokinesis as part of the HAUS augmin-like complex. In Mus musculus (Mouse), this protein is HAUS augmin-like complex subunit 8 (Haus8).